The following is a 278-amino-acid chain: NAD-capped RNA hydrolase NudC (278 aa).

Position 84 (R84) interacts with substrate. The Zn(2+) site is built by C114 and C117. A substrate-binding site is contributed by E127. C132 contacts Zn(2+). Y140 contributes to the substrate binding site. The Nudix hydrolase domain maps to 141-264 (PRISPSMIVL…SIARYLIEAY (124 aa)). A divalent metal cation is bound by residues A174, E190, and E194. Residues 175–196 (GFVEPGESAEDCVHREVMEEVQ) carry the Nudix box motif. Residue 208–215 (QCWPFPHS) participates in substrate binding. Residue E235 participates in a divalent metal cation binding. A257 is a binding site for substrate.

Belongs to the Nudix hydrolase family. NudC subfamily. As to quaternary structure, homodimer. The cofactor is Mg(2+). Mn(2+) is required as a cofactor. Zn(2+) serves as cofactor.

The catalysed reaction is a 5'-end NAD(+)-phospho-ribonucleoside in mRNA + H2O = a 5'-end phospho-adenosine-phospho-ribonucleoside in mRNA + beta-nicotinamide D-ribonucleotide + 2 H(+). It catalyses the reaction NAD(+) + H2O = beta-nicotinamide D-ribonucleotide + AMP + 2 H(+). It carries out the reaction NADH + H2O = reduced beta-nicotinamide D-ribonucleotide + AMP + 2 H(+). Functionally, mRNA decapping enzyme that specifically removes the nicotinamide adenine dinucleotide (NAD) cap from a subset of mRNAs by hydrolyzing the diphosphate linkage to produce nicotinamide mononucleotide (NMN) and 5' monophosphate mRNA. The NAD-cap is present at the 5'-end of some mRNAs and stabilizes RNA against 5'-processing. Has preference for mRNAs with a 5'-end purine. Catalyzes the hydrolysis of a broad range of dinucleotide pyrophosphates. This is NAD-capped RNA hydrolase NudC from Pseudomonas syringae pv. syringae (strain B728a).